We begin with the raw amino-acid sequence, 577 residues long: MGTSYRKLGYVLFLMLGMIVEEGIAYVRVKEKQSSPSFMGIYDESAVASDAVPCAEAGQSMLRQKGSAVDAAIATLLCIGVYNPQSSGIGGGSFMVIYDRSTRTPEVIDAREEAPAAATQKMFKGDKKLSSEGGLSIAVPGELRGMALAHERHGKLDWETLFQPAIRLAKEGFPVGSELAMALREQRSHILNSPTLKAVFTDPVSGDILKENDIVIRTKLGETLEKIAKNGADEFYEGQVAKDLINDIKSFGGIITAEDLKNYQPVLKNATVAHLSGCLTLYSVPPPSSGYILSFILRVLDKFHFSKASVSDIENATLTYHRFLETLKYAYAYRTKLGDERIENVSSVIAELTSEDVIEKTKQKIEDGKTYEPLHYGAQLATNDHGTAHISVVSREGDAVVVTTTINYWFGSGLRSPSTGVILNDEMDDFSAPDIQNIYGVPPSKANFIVPGKRPQSSTCPSIFVNKGGDVVMAIGASGGTRITSSVSLTSMRVLWLGRNIKEAIDEPRLHHQLLPDEIEYESKFPNEILEKLKAIGHKTKPAGAFGSLVVGIKRMKGGTLTANYDYRRGGSVDGSK.

Positions 1–25 (MGTSYRKLGYVLFLMLGMIVEEGIA) are cleaved as a signal peptide.

As to quaternary structure, heterodimer composed of subunits alpha and beta; probably disulfide-linked. In terms of tissue distribution, expressed by the venom gland.

The protein localises to the secreted. Functionally, dose-dependently induces human platelet aggregation on both plasma rich platelet and washed platelet (max. response at 3.2 ug/mL) and causes hemolysis against mouse and rabbit erythrocytes (35 and 65% respectively at 5 ug/mL). Does not show hemolytic activity against human erythrocytes (even at 100 ug/mL). This Scolopendra dehaani (Thai centipede) protein is Scoloptoxin SSD14.